The sequence spans 602 residues: Solute carrier organic anion transporter family member 1C1 (602 aa).

The Cytoplasmic portion of the chain corresponds to 1–43 (MDTSSKENIQLFCKTSVQPVGRPSFKTEYPSSEEKQPCCGELK). The chain crosses the membrane as a helical span at residues 44–63 (VFLGALSFVYFAKALAEGYL). Topologically, residues 64–82 (KSTITQIERRFDIPSSLVG) are extracellular. The helical transmembrane segment at 83-103 (VIDGSFEIGNLLVITFVSYFG) threads the bilayer. Residues 104-109 (AKLHRP) lie on the Cytoplasmic side of the membrane. A helical membrane pass occupies residues 110–134 (KIIGAGCLIMGVGTLLIAMPQFFME). Residues 135-139 (QYKYE) lie on the Extracellular side of the membrane. The chain crosses the membrane as a helical span at residues 140–156 (IYSPSSNSTLSISPCLL). Topologically, residues 157–238 (ESSSQLPVSV…ARDFLPSLKY (82 aa)) are cytoplasmic. Residues 190 to 216 (PRSQSREDSNSSSEKSKFIRDDHTDYQ) are disordered. Residues 193–214 (QSREDSNSSSEKSKFIRDDHTD) show a composition bias toward basic and acidic residues. Residues 239–260 (LFGNPVYFLYLCTSTVQFNSLF) form a helical membrane-spanning segment. Residues 261–280 (GMVTYKPKYIEQQYGQSSSR) are Extracellular-facing. A helical transmembrane segment spans residues 281 to 304 (ANFVIGLINIPAVALGIFSGGIAM). Over 305–308 (KKFR) the chain is Cytoplasmic. A helical membrane pass occupies residues 309–332 (ISVCGAAKLYLGSSVFGYLLFLSL). Residues 333-444 (FALGCENSDV…NGCPQMFLYF (112 aa)) are Extracellular-facing. The region spanning 360-415 (RALFSDCNPRCKCSETKWEPMCGENGITYVSACPAGCQTSNRSGKNIIFYNCTCVG) is the Kazal-like domain. Cystine bridges form between cysteine 366/cysteine 396, cysteine 372/cysteine 392, and cysteine 381/cysteine 413. 3 N-linked (GlcNAc...) asparagine glycosylation sites follow: asparagine 400, asparagine 410, and asparagine 423. Residues 445–467 (LVISVITSYTLSLGGIPGYILLL) traverse the membrane as a helical segment. At 468 to 476 (RCIKPQLKS) the chain is on the cytoplasmic side. The chain crosses the membrane as a helical span at residues 477–502 (FALGIYTLSIRVLAGIPAPVYFGVLI). Over 503-536 (DTSCLKWGFKRCGSRGSCRLYDSNVFRHIYLGLT) the chain is Extracellular. Residues 537 to 554 (VILGTVSIFLSIAVLFIL) traverse the membrane as a helical segment. Residues 555–602 (KKNYVSKHRNFITKRERTMVSTRFQKENCTTSDHLLQPKYWPGKETQL) are Cytoplasmic-facing.

The protein belongs to the organo anion transporter (TC 2.A.60) family.

It is found in the cell membrane. The enzyme catalyses 3,3',5'-triiodo-L-thyronine(out) = 3,3',5'-triiodo-L-thyronine(in). It catalyses the reaction L-thyroxine(out) = L-thyroxine(in). The catalysed reaction is L-thyroxine sulfate(out) = L-thyroxine sulfate(in). Mediates the Na(+)-independent high affinity transport of organic anions such as the thyroid hormones L-thyroxine (T4), L-thyroxine sulfate (T4S), and 3,3',5'-triiodo-L-thyronine (reverse T3, rT3) at the plasma membrane. Regulates T4 levels in different brain regions by transporting T4, and also by serving as an export pump for T4S, which is a source of T4 after hydrolysis by local sulfatases. Increases the access of these substrates to the intracellular sites where they are metabolized by the deiodinases. Other potential substrates, such as triiodothyronine (T3), 17-beta-glucuronosyl estradiol (17beta-estradiol 17-O-(beta-D-glucuronate)), estrone-3-sulfate (E1S) and sulfobromophthalein (BSP) are transported with much lower efficiency. Transports T4 and E1S in a pH-insensitive manner. Facilitates the transport of thyroid hormones across the blood-brain barrier and into glia and neuronal cells in the brain. The chain is Solute carrier organic anion transporter family member 1C1 (SLCO1C1) from Macaca fascicularis (Crab-eating macaque).